Reading from the N-terminus, the 158-residue chain is ATP synthase subunit b' (158 aa).

Residues 24 to 44 form a helical membrane-spanning segment; sequence ATLPLMAVQILVLVFLLNAVF.

Belongs to the ATPase B chain family. In terms of assembly, F-type ATPases have 2 components, F(1) - the catalytic core - and F(0) - the membrane proton channel. F(1) has five subunits: alpha(3), beta(3), gamma(1), delta(1), epsilon(1). F(0) has four main subunits: a(1), b(1), b'(1) and c(10-14). The alpha and beta chains form an alternating ring which encloses part of the gamma chain. F(1) is attached to F(0) by a central stalk formed by the gamma and epsilon chains, while a peripheral stalk is formed by the delta, b and b' chains.

It is found in the cellular thylakoid membrane. Functionally, f(1)F(0) ATP synthase produces ATP from ADP in the presence of a proton or sodium gradient. F-type ATPases consist of two structural domains, F(1) containing the extramembraneous catalytic core and F(0) containing the membrane proton channel, linked together by a central stalk and a peripheral stalk. During catalysis, ATP synthesis in the catalytic domain of F(1) is coupled via a rotary mechanism of the central stalk subunits to proton translocation. Component of the F(0) channel, it forms part of the peripheral stalk, linking F(1) to F(0). The b'-subunit is a diverged and duplicated form of b found in plants and photosynthetic bacteria. This is ATP synthase subunit b' from Synechococcus elongatus (strain ATCC 33912 / PCC 7942 / FACHB-805) (Anacystis nidulans R2).